The following is a 149-amino-acid chain: Transcriptional repressor NrdR (149 aa).

The segment at cysteine 3–cysteine 34 is a zinc-finger region. The region spanning isoleucine 49–threonine 139 is the ATP-cone domain.

This sequence belongs to the NrdR family. Requires Zn(2+) as cofactor.

Functionally, negatively regulates transcription of bacterial ribonucleotide reductase nrd genes and operons by binding to NrdR-boxes. This chain is Transcriptional repressor NrdR, found in Clostridium perfringens (strain ATCC 13124 / DSM 756 / JCM 1290 / NCIMB 6125 / NCTC 8237 / Type A).